The primary structure comprises 341 residues: Anthranilate phosphoribosyltransferase (341 aa).

5-phospho-alpha-D-ribose 1-diphosphate-binding positions include Gly-79, 82–83 (GD), Thr-87, 89–92 (NIST), 107–115 (KHGNRAVSS), and Ser-119. Gly-79 contributes to the anthranilate binding site. A Mg(2+)-binding site is contributed by Ser-91. Asn-110 contacts anthranilate. An anthranilate-binding site is contributed by Arg-165. Residues Asp-224 and Glu-225 each coordinate Mg(2+).

Belongs to the anthranilate phosphoribosyltransferase family. As to quaternary structure, homodimer. Mg(2+) serves as cofactor.

It catalyses the reaction N-(5-phospho-beta-D-ribosyl)anthranilate + diphosphate = 5-phospho-alpha-D-ribose 1-diphosphate + anthranilate. It participates in amino-acid biosynthesis; L-tryptophan biosynthesis; L-tryptophan from chorismate: step 2/5. In terms of biological role, catalyzes the transfer of the phosphoribosyl group of 5-phosphorylribose-1-pyrophosphate (PRPP) to anthranilate to yield N-(5'-phosphoribosyl)-anthranilate (PRA). The polypeptide is Anthranilate phosphoribosyltransferase (Bacillus cereus (strain AH187)).